The chain runs to 164 residues: UPF0225 protein Shewmr4_2054 (164 aa).

Belongs to the UPF0225 family.

The protein is UPF0225 protein Shewmr4_2054 of Shewanella sp. (strain MR-4).